Here is a 378-residue protein sequence, read N- to C-terminus: MEYSHLYQKILSNLNNNNKLNCIFCKDEVFQVEWPGHLTLCCQLTIEYIKIINSPTQTINNINDDNKKLKIEKIENNYKQNLISNCTLCTEPIRLHNYIHHTNECISFIKNNFRQYLIDQIEYANIDNNSNTLNETINNNFIKNTTTTTTTTATTSNNRFNNNNSNNNNINNNNDNNNKEQKKESRCRELLVKKEKEPTSEVKKSNIDKNKNKKEQECIKIKELNDNRKMNFGHTKSQVNLQRVEICIFFNRCSDECGKPIRGKNKKLDLFSFVIGIGNEILKICRFSHFHSKDFYRLFYKDYYDKSIDIPNEIIDEKCIGIHCTGDTKNFNCTKHIYFSRNSISQIKFYFCSIYCLMDTIKSYDLEHLENFKKIMDD.

Positions threonine 150–asparagine 176 are enriched in low complexity. The interval threonine 150–cysteine 187 is disordered. The span at asparagine 177–cysteine 187 shows a compositional bias: basic and acidic residues.

This is an uncharacterized protein from Dictyostelium discoideum (Social amoeba).